Here is a 651-residue protein sequence, read N- to C-terminus: Choline transporter-like protein 1 (651 aa).

Residues 1 to 25 (MGCCGSTQNSKRDWRPLEEHSCTDI) lie on the Cytoplasmic side of the membrane. Residues 26-46 (PWLLLFILFCVGMGFICGFSI) traverse the membrane as a helical segment. At 47-208 (ATGAASRLVF…RLISGVMTSK (162 aa)) the chain is on the extracellular side. Asn-131 and Asn-176 each carry an N-linked (GlcNAc...) asparagine glycan. A helical membrane pass occupies residues 209 to 229 (EIIMGLCLLSLVLSMILMVII). Residues 230–234 (RYISR) lie on the Cytoplasmic side of the membrane. Residues 235–255 (VLVWIITILVVLGSLGGTGVL) traverse the membrane as a helical segment. The Extracellular segment spans residues 256–284 (WWLYADNKKSLNENLPPDQLQVSKDNLQA). A helical membrane pass occupies residues 285-305 (LLVYAIAATVFTVILLLMMLI). Residues 306–311 (MRKRVA) are Cytoplasmic-facing. Residues 312–332 (LTIALFNVAGKVFIHLPLLVF) form a helical membrane-spanning segment. Residues 333 to 334 (QP) lie on the Extracellular side of the membrane. A helical transmembrane segment spans residues 335–355 (FWTFFALLLFWVYWVMVLLFL). Residues 356–376 (GTAGDPFTNEQGFVEFRINGP) lie on the Cytoplasmic side of the membrane. The chain crosses the membrane as a helical span at residues 377–397 (LQYMWWYHLVGLIWISEFILA). The Extracellular portion of the chain corresponds to 398–438 (CQQMTIAGAVVTYYFTRNKNDLPFTPILASVNRLIRYHLGT). Residues 439–459 (VAKGAFIITLVKIPRMILMYI) form a helical membrane-spanning segment. Topologically, residues 460 to 533 (HSQLKGKENA…RVAAINTVGD (74 aa)) are cytoplasmic. The chain crosses the membrane as a helical span at residues 534–554 (FMLFLGKILIVSCTGLAGIML). Over 555-562 (LNYQRDYT) the chain is Extracellular. A helical transmembrane segment spans residues 563–583 (VWVLPLIIVCLFAFLVAHCFL). At 584 to 651 (SIYEMVVDVL…KPMASGTSTA (68 aa)) the chain is on the cytoplasmic side. The disordered stretch occupies residues 629 to 651 (LKEPGSTAEGRELKPMASGTSTA).

This sequence belongs to the CTL (choline transporter-like) family.

Its subcellular location is the cell membrane. The protein localises to the mitochondrion outer membrane. The enzyme catalyses choline(out) + n H(+)(in) = choline(in) + n H(+)(out). It catalyses the reaction ethanolamine(out) + n H(+)(in) = ethanolamine(in) + n H(+)(out). In terms of biological role, choline/H+ antiporter. Also acts as a high-affinity ethanolamine/H+ antiporter, regulating the supply of extracellular ethanolamine (Etn) for the CDP-Etn pathway, redistribute intracellular Etn and balance the CDP-Cho and CDP-Etn arms of the Kennedy pathway. Involved in membrane synthesis and myelin production. This chain is Choline transporter-like protein 1 (slc44a1), found in Xenopus laevis (African clawed frog).